The chain runs to 202 residues: Imidazoleglycerol-phosphate dehydratase (202 aa).

Belongs to the imidazoleglycerol-phosphate dehydratase family.

It localises to the cytoplasm. It carries out the reaction D-erythro-1-(imidazol-4-yl)glycerol 3-phosphate = 3-(imidazol-4-yl)-2-oxopropyl phosphate + H2O. It participates in amino-acid biosynthesis; L-histidine biosynthesis; L-histidine from 5-phospho-alpha-D-ribose 1-diphosphate: step 6/9. The protein is Imidazoleglycerol-phosphate dehydratase of Nocardioides sp. (strain ATCC BAA-499 / JS614).